A 172-amino-acid chain; its full sequence is Disulfide bond formation protein B (172 aa).

At 1–16 (MNLFASLNQFSKNRIS) the chain is on the cytoplasmic side. Residues 17-33 (WLLLLLFVVFFEGAALF) form a helical membrane-spanning segment. Over 34 to 51 (FQHVMMLSPCVMCIYERV) the chain is Periplasmic. A disulfide bridge links C43 with C46. Residues 52–67 (AMLGVGGAALFGLIAP) form a helical membrane-spanning segment. Over 68 to 74 (NNPLVRW) the chain is Cytoplasmic. The chain crosses the membrane as a helical span at residues 75–92 (LGLAAWGASAYKGLALSL). Topologically, residues 93–147 (QHVDYQFNPSPFATCDLFVTFPDWAPLNQWAPWMFEAYGDCSKIVWQFMTLSMPQ) are periplasmic. Residues C107 and C133 are joined by a disulfide bond. Residues 148-166 (WLVIIFAGNLVALAFIVIA) traverse the membrane as a helical segment. Residues 167 to 172 (QFFKSK) are Cytoplasmic-facing.

The protein belongs to the DsbB family.

It is found in the cell inner membrane. Functionally, required for disulfide bond formation in some periplasmic proteins. Acts by oxidizing the DsbA protein. The sequence is that of Disulfide bond formation protein B from Vibrio vulnificus (strain CMCP6).